We begin with the raw amino-acid sequence, 469 residues long: Phenolic glucoside malonyltransferase 1 (469 aa).

Met1 carries the post-translational modification N-acetylmethionine. The active-site Proton acceptor is the His169. The HXXXD motif signature appears at 169–173 (HAVLD). A malonyl-CoA-binding site is contributed by 291–292 (ST). Catalysis depends on Asp413, which acts as the Proton acceptor. The DFGWG motif motif lies at 413–417 (DFGWG).

This sequence belongs to the plant acyltransferase family. Phenolic glucoside malonyltransferase subfamily.

It catalyses the reaction a flavonol 3-O-beta-D-glucoside + malonyl-CoA = a flavonol 3-O-(6-O-malonyl-beta-D-glucoside) + CoA. It carries out the reaction a flavonol 7-O-beta-D-glucoside + malonyl-CoA = a flavonol 7-O-(6-O-malonyl-beta-D-glucoside) + CoA. Its function is as follows. Malonyltransferase acting on xenobiotic glucosides. Has activity toward 2-Naphthol glucoside (2NAG), 1-Naphthol glucoside (1NAG), kaempferol 7-O-glucoside, kaempferol 3-O-glucoside, hydroxycoumarin glucosides, phenol-glucosides and isoflavone glucoside (daidzin), but not toward 4-coumaroyl glucoside, kaempferol 3,7-O-diglucoside, salicylic acid glucoside and phlorizin. In vivo, seems to be involved in the malonylation of 2-Naphthol glucoside while PMAT2 would be involved in the malonylation of 4-methylumbelliferone glucoside or 4-nitrophenyl glucoside. The sequence is that of Phenolic glucoside malonyltransferase 1 (PMAT1) from Arabidopsis thaliana (Mouse-ear cress).